Reading from the N-terminus, the 399-residue chain is Putative 8-amino-7-oxononanoate synthase (399 aa).

Arg-24 is a substrate binding site. 111-112 (GW) lines the pyridoxal 5'-phosphate pocket. His-141 serves as a coordination point for substrate. Residues Ser-189, 214 to 217 (DEAH), and 243 to 246 (TFSK) contribute to the pyridoxal 5'-phosphate site. Lys-246 is subject to N6-(pyridoxal phosphate)lysine. Thr-360 serves as a coordination point for substrate.

The protein belongs to the class-II pyridoxal-phosphate-dependent aminotransferase family. BioF subfamily. As to quaternary structure, homodimer. It depends on pyridoxal 5'-phosphate as a cofactor.

It carries out the reaction 6-carboxyhexanoyl-[ACP] + L-alanine + H(+) = (8S)-8-amino-7-oxononanoate + holo-[ACP] + CO2. It participates in cofactor biosynthesis; biotin biosynthesis. In terms of biological role, catalyzes the decarboxylative condensation of pimeloyl-[acyl-carrier protein] and L-alanine to produce 8-amino-7-oxononanoate (AON), [acyl-carrier protein], and carbon dioxide. In Bordetella bronchiseptica (strain ATCC BAA-588 / NCTC 13252 / RB50) (Alcaligenes bronchisepticus), this protein is Putative 8-amino-7-oxononanoate synthase (bioF).